The chain runs to 135 residues: Small ribosomal subunit protein eS24A (135 aa).

Serine 2 is modified (N-acetylserine). Serine 14 is subject to Phosphoserine. Lysine 21 is covalently cross-linked (Glycyl lysine isopeptide (Lys-Gly) (interchain with G-Cter in ubiquitin)). A Phosphoserine modification is found at serine 56. The segment at 102 to 135 (KASRQQRKQKKNRDKKIFGTGKRLAKKVARRNAD) is disordered. Basic residues-rich tracts occupy residues 105-115 (RQQRKQKKNRD) and 124-135 (RLAKKVARRNAD).

Belongs to the eukaryotic ribosomal protein eS24 family. As to quaternary structure, component of the small ribosomal subunit (SSU). Mature yeast ribosomes consist of a small (40S) and a large (60S) subunit. The 40S small subunit contains 1 molecule of ribosomal RNA (18S rRNA) and 33 different proteins (encoded by 57 genes). The large 60S subunit contains 3 rRNA molecules (25S, 5.8S and 5S rRNA) and 46 different proteins (encoded by 81 genes). N-terminally acetylated by acetyltransferase NatA. Also partially acetylated by NatC.

It localises to the cytoplasm. Functionally, component of the ribosome, a large ribonucleoprotein complex responsible for the synthesis of proteins in the cell. The small ribosomal subunit (SSU) binds messenger RNAs (mRNAs) and translates the encoded message by selecting cognate aminoacyl-transfer RNA (tRNA) molecules. The large subunit (LSU) contains the ribosomal catalytic site termed the peptidyl transferase center (PTC), which catalyzes the formation of peptide bonds, thereby polymerizing the amino acids delivered by tRNAs into a polypeptide chain. The nascent polypeptides leave the ribosome through a tunnel in the LSU and interact with protein factors that function in enzymatic processing, targeting, and the membrane insertion of nascent chains at the exit of the ribosomal tunnel. The protein is Small ribosomal subunit protein eS24A of Saccharomyces cerevisiae (strain ATCC 204508 / S288c) (Baker's yeast).